Consider the following 689-residue polypeptide: Ribonuclease J (689 aa).

The disordered stretch occupies residues 1 to 88; the sequence is MTDNNQNNEN…RNYAQEELDS (88 aa). Basic and acidic residues predominate over residues 9 to 24; sequence ENHENSSENSKADEMR. Positions 56 to 78 are enriched in basic residues; the sequence is HHKKEHRPNKKPNNHHKQKHAKT. N6-acetyllysine is present on residues Lys-132 and Lys-138. Zn(2+) contacts are provided by His-206, His-208, Asp-210, His-211, His-275, and Asp-297. N6-acetyllysine occurs at positions 321, 335, and 395. Residue 498–502 participates in substrate binding; that stretch reads HVSGH. At Lys-509 the chain carries N6-acetyllysine. His-524 contributes to the Zn(2+) binding site. Lys-545, Lys-632, and Lys-647 each carry N6-acetyllysine.

Belongs to the metallo-beta-lactamase superfamily. RNA-metabolizing metallo-beta-lactamase-like family. Bacterial RNase J subfamily. Homodimer. Homotetramer; dimer of homodimers. Interacts with RNA helicase RhpA, might be a member of a minimal RNA degradosome complex. Zn(2+) is required as a cofactor. In terms of processing, acetylated on nine lysine residues. Some of the residues are acetylated by multiple different mechanisms. RimL is partially responsible for the acetylation of Lys-321, Lys-395 and Lys-647. HPB8_1270 homolog is partially responsible for the acetylation of Lys-321, Lys-395, Lys-509 and Lys-647. Acetyl-phosphate-mediated non-enzymatic acetylation pathway takes part in the acetylation of Lys-132, Lys-321, Lys-395, Lys-509 and Lys-647. Acetylation of the remaining residues Lys-138, Lys-335, Lys-545 and Lys-632 occurs by a yet undetermined mechanism. Acetylation on a number of these residues is important for growth regulation and proper cell morphology.

The protein resides in the cytoplasm. Catalytic activity is regulated by the balance between homodimers and homotetramers, with homotetramers being the active forms of this enzyme. Acetylation allosterically regulates the homooligomerization state and hence the catalytic activity. An RNase that has 5'-3' exoribonuclease and endoribonuclease activity. Degrades 5'-monophosphorylated ssRNA and dsRNA, considerably more active on ssRNA. Association with RhpA significantly increases the dsRNase activity. Degrades RNA substrate with hairpin structures at both ends with low activity, but presence of RhpA significantly increases the activity on this substrate. Stimulates ATPase activity of RNA helicase RhpA. Involved in stabilization of mRNA but apparently not rRNA. This Helicobacter pylori (strain ATCC 700392 / 26695) (Campylobacter pylori) protein is Ribonuclease J.